Reading from the N-terminus, the 505-residue chain is 2-isopropylmalate synthase (505 aa).

The 265-residue stretch at 5–269 (IKIFDTTLRD…ETGIHTEYLY (265 aa)) folds into the Pyruvate carboxyltransferase domain. Positions 14, 204, 206, and 240 each coordinate Mn(2+). The tract at residues 393–505 (SLLYFHTFTG…AVNRFELRKR (113 aa)) is regulatory domain.

The protein belongs to the alpha-IPM synthase/homocitrate synthase family. LeuA type 1 subfamily. In terms of assembly, homodimer. It depends on Mn(2+) as a cofactor.

It is found in the cytoplasm. The catalysed reaction is 3-methyl-2-oxobutanoate + acetyl-CoA + H2O = (2S)-2-isopropylmalate + CoA + H(+). Its pathway is amino-acid biosynthesis; L-leucine biosynthesis; L-leucine from 3-methyl-2-oxobutanoate: step 1/4. Catalyzes the condensation of the acetyl group of acetyl-CoA with 3-methyl-2-oxobutanoate (2-ketoisovalerate) to form 3-carboxy-3-hydroxy-4-methylpentanoate (2-isopropylmalate). The chain is 2-isopropylmalate synthase from Sediminispirochaeta smaragdinae (strain DSM 11293 / JCM 15392 / SEBR 4228) (Spirochaeta smaragdinae).